A 1114-amino-acid chain; its full sequence is OTU domain-containing protein 4 (1114 aa).

At Met-1 the chain carries N-acetylmethionine. The tract at residues Met-1–Ala-22 is disordered. Gly residues predominate over residues Pro-8–Gly-17. Residues Leu-34–Ile-155 enclose the OTU domain. The interval Val-39–Cys-45 is cys-loop. Asp-42 is an active-site residue. Catalysis depends on Cys-45, which acts as the Nucleophile. The variable-loop stretch occupies residues Leu-94–Val-104. Tyr-120 is subject to Phosphotyrosine. A phosphoserine mark is found at Ser-126 and Ser-128. Thr-131 is subject to Phosphothreonine. Residues Phe-143–His-148 form a his-loop region. His-148 is a catalytic residue. A phosphoserine mark is found at Ser-166, Ser-199, Ser-202, Ser-204, and Ser-341. Residues Lys-323 to Glu-449 form a disordered region. Positions Phe-392–Phe-404 are enriched in low complexity. Over residues Arg-420–Arg-435 the composition is skewed to basic and acidic residues. Tyr-439 is modified (phosphotyrosine). Ser-443 bears the Phosphoserine mark. Tyr-460 bears the Phosphotyrosine mark. A disordered region spans residues Ala-472 to Val-567. Residues Ser-474–Asn-487 show a composition bias toward low complexity. Residues His-496–Glu-529 show a composition bias toward basic and acidic residues. Residues Ser-546, Ser-893, and Ser-900 each carry the phosphoserine modification. A disordered region spans residues Glu-911 to Thr-1114. 2 stretches are compositionally biased toward basic and acidic residues: residues Pro-913 to Ser-922 and Asn-969 to Thr-1000. Residues Ser-1006, Ser-1011, Ser-1014, Ser-1023, and Ser-1024 each carry the phosphoserine modification. Residues Ser-1039–Gly-1048 are compositionally biased toward polar residues. Ser-1049 is subject to Phosphoserine. 2 stretches are compositionally biased toward basic and acidic residues: residues Val-1067 to Gln-1086 and Phe-1096 to Thr-1114.

In terms of assembly, interacts with MYD88; the interaction is direct. Interacts with ALKBH3; the interaction is direct. Interacts with USP7; the interaction is direct. Interacts with USP9X; the interaction is direct. In terms of processing, phosphorylated on Ser-202 and Ser-204 likely by CSNK2A1-CSNK2A2 serine/threonine-protein kinase complex. Activates 'Lys-63'-specific deubiquitinase activity.

Its subcellular location is the cytoplasm. It localises to the nucleus. The catalysed reaction is Thiol-dependent hydrolysis of ester, thioester, amide, peptide and isopeptide bonds formed by the C-terminal Gly of ubiquitin (a 76-residue protein attached to proteins as an intracellular targeting signal).. With respect to regulation, phosphorylation on Ser-202 and Ser-204 induces 'Lys-63'-specific deubiquitinase activity. Its function is as follows. Deubiquitinase which hydrolyzes the isopeptide bond between the ubiquitin C-terminus and the lysine epsilon-amino group of the target protein. May negatively regulate inflammatory and pathogen recognition signaling in innate immune response. Upon phosphorylation at Ser-202 and Ser-204 residues, via IL-1 receptor and Toll-like receptor signaling pathway, specifically deubiquitinates 'Lys-63'-polyubiquitinated MYD88 adapter protein triggering down-regulation of NF-kappa-B-dependent transcription of inflammatory mediators. Independently of the catalytic activity, acts as a scaffold for alternative deubiquitinases to assemble specific deubiquitinase-substrate complexes. Associates with USP7 and USP9X deubiquitinases to stabilize alkylation repair enzyme ALKBH3, thereby promoting the repair of alkylated DNA lesions. The protein is OTU domain-containing protein 4 of Homo sapiens (Human).